A 340-amino-acid polypeptide reads, in one-letter code: N-acetyl-gamma-glutamyl-phosphate reductase (340 aa).

The active site involves C146.

It belongs to the NAGSA dehydrogenase family. Type 1 subfamily.

It is found in the cytoplasm. The catalysed reaction is N-acetyl-L-glutamate 5-semialdehyde + phosphate + NADP(+) = N-acetyl-L-glutamyl 5-phosphate + NADPH + H(+). The protein operates within amino-acid biosynthesis; L-arginine biosynthesis; N(2)-acetyl-L-ornithine from L-glutamate: step 3/4. Its function is as follows. Catalyzes the NADPH-dependent reduction of N-acetyl-5-glutamyl phosphate to yield N-acetyl-L-glutamate 5-semialdehyde. In Streptococcus sanguinis (strain SK36), this protein is N-acetyl-gamma-glutamyl-phosphate reductase.